Here is a 549-residue protein sequence, read N- to C-terminus: Probable protein kinase UbiB (549 aa).

Residues 123–501 (DFDETPLASA…QQQAHKSNYL (379 aa)) form the Protein kinase domain. Residues 129-137 (LASASISQV) and Lys-152 each bind ATP. The active-site Proton acceptor is the Asp-287. 2 consecutive transmembrane segments (helical) span residues 498–518 (SNYL…LFNQ) and 520–540 (ATLW…IIGW).

It belongs to the ABC1 family. UbiB subfamily.

The protein resides in the cell inner membrane. The protein operates within cofactor biosynthesis; ubiquinone biosynthesis [regulation]. Its function is as follows. Is probably a protein kinase regulator of UbiI activity which is involved in aerobic coenzyme Q (ubiquinone) biosynthesis. This chain is Probable protein kinase UbiB, found in Shewanella sp. (strain ANA-3).